The following is a 235-amino-acid chain: Small ribosomal subunit protein uS2 (235 aa).

This sequence belongs to the universal ribosomal protein uS2 family.

The protein is Small ribosomal subunit protein uS2 (rpsB) of Geobacillus stearothermophilus (Bacillus stearothermophilus).